Here is a 252-residue protein sequence, read N- to C-terminus: DNA-directed RNA polymerase III subunit rpc8 (252 aa).

Residues 214 to 252 (WTNQSAGDDDENEEDGGENQDDEVAEDDGGEEPTIEEDE) form a disordered region. The segment covering 220 to 252 (GDDDENEEDGGENQDDEVAEDDGGEEPTIEEDE) has biased composition (acidic residues).

The protein belongs to the eukaryotic RPB7/RPC8 RNA polymerase subunit family. As to quaternary structure, component of the RNA polymerase III (Pol III) complex consisting of several subunits.

The protein resides in the nucleus. Its function is as follows. DNA-dependent RNA polymerase catalyzes the transcription of DNA into RNA using the four ribonucleoside triphosphates as substrates. The sequence is that of DNA-directed RNA polymerase III subunit rpc8 (polr3h-1) from Dictyostelium discoideum (Social amoeba).